A 1099-amino-acid polypeptide reads, in one-letter code: SLIT-ROBO Rho GTPase-activating protein 3 (1099 aa).

Residues A19–D314 form the F-BAR domain. A coiled-coil region spans residues Q352–T392. The segment at G470–P493 is disordered. Residues G506–F694 form the Rho-GAP domain. Residues V744–M803 form the SH3 domain. Polar residues predominate over residues D809–S820. The segment at D809–G846 is disordered. S817, S820, S821, S837, and S858 each carry phosphoserine. Residues A861–K911 form a disordered region. A coiled-coil region spans residues H952–A987. S954 carries the post-translational modification Phosphoserine. 2 disordered regions span residues T994–H1014 and A1045–M1099. A compositionally biased stretch (low complexity) spans V1060 to S1074. Polar residues predominate over residues P1089–M1099.

In terms of assembly, homodimer. Forms a heterooligomer with SRGAP1 and SRGAP2 through its F-BAR domain. Interacts with WASF1. Probably interacts with ROBO1. Interacts with FASLG.

Functionally, GTPase-activating protein for RAC1 and perhaps CDC42, but not for RhoA small GTPase. May attenuate RAC1 signaling in neurons. This chain is SLIT-ROBO Rho GTPase-activating protein 3 (Srgap3), found in Mus musculus (Mouse).